The sequence spans 1401 residues: MSDLLGILKQQGQSEEFDAIKIALASPELIRSWSYGEVKKPETINYRTFKPERDGLFCAKTFGPVKDYECLCGKYKRLKHRGVICEKCGVELALAKVRRERMGHIELASPVAHIWFLKSLPSRIGLLLDMTLRDIERVLYFEAFVVVDPGMTELERGQLLNDEAYLDAMEQYGDEFDARMGAEAIRDLLRQIDLEDEIRNLREELPTTNSETKIKKITKRLKLLEAFYESGNKPEWMIMDVLPVLPPDLRPLVPLDGGRFATSDLNDLYRRVINRNNRLKRLLDLNAPDIIVRNEKRMLQESVDALLDNGRRGRAITGTNKRPLKSLADMIKGKQGRFRQNLLGKRVDYSGRSVIVVGPTLKLHQCGLPKKMALELFKPFIFSKLEFRGLATTIKAAKKMVEREESVVWDILDDVIREHPILLNRAPTLHRLGIQAFEPVLIEGKAIQLHPLVCTAYNADFDGDQMAVHVPLTLEAQLEARSLMMSTNNILSPASGEPIIVPSQDVVLGLYYLTREKVNALGEGKIYSSAQEAQNFYEAGHLDIHAKIKIRMPKEDGETGYHLVETTVGRAILAEILPKGMPFDYINRTMTKKVISKVIDSCYRKFGLKETVIFADQLMYTGFKYATRSGASIGIEDMEIPDDKASIIEHADNEVREIESQFRSGLVTNGERYNKVIDIWSRTNELVAKSMMSKIATEEVTDAKGNKVRQESFNPIFMMADSGARGSAAQIRQLAGMRGLMAAPDGSIIETPITANFREGLNVFQYFISTHGARKGLADTALKTANSGYLTRRLVDVAQDVVITEDDCGTDTGILMQPLIEGGDIVEPLHERVLGRVVASDVYIPTQTEPVVKAGTLLDEEWVEKLEKHGVDQVMVRSPITCQTRFGLCAKCYGRDLARGHLVNTGEAVGIIAAQSIGEPGTQLTMRTFHIGGAASRATAANNIQIKTKGVIRLHNIKTVTHENKNLVAVSRSGEVTIVDEFGRERERYKVPYGAVISAQDNSPVEAGQVIATWDPHTHPVISEVSGRLKFVDLIDGITMNRQTDELTGLSNIVIIDAKQRSAAGRDLRPMVKLVTDEGDDIYLAGTNVPAQYYLPVDAIVNFEDGSLVGIGDVIARIPQERSKTRDITGGLPRVADLFEARKPKDSAVMAEVSGLVNFGKETKGKRRLIINVSEDQCHEELIPKWRHISVFEGEHVERGEIIAEGALNPHDILRLLGVGALANYIVNEVQDVYRLQGVKINDKHIEVIVRQMLRKRVITFAGDSKFLVGEQVEESAMLQENDKLLAEGKQIARGTPILLGITKASLATESFISAASFQETTRVLTEAAVSGKVDELRGLKENVMVGRLIPAGTGYTYHQSRKAKRARVAAGGDSSATHTVTASDVEHALSEALNADNHEH.

4 residues coordinate Zn(2+): Cys-70, Cys-72, Cys-85, and Cys-88. Positions 460, 462, and 464 each coordinate Mg(2+). Zn(2+)-binding residues include Cys-808, Cys-882, Cys-889, and Cys-892.

This sequence belongs to the RNA polymerase beta' chain family. As to quaternary structure, the RNAP catalytic core consists of 2 alpha, 1 beta, 1 beta' and 1 omega subunit. When a sigma factor is associated with the core the holoenzyme is formed, which can initiate transcription. It depends on Mg(2+) as a cofactor. The cofactor is Zn(2+).

It carries out the reaction RNA(n) + a ribonucleoside 5'-triphosphate = RNA(n+1) + diphosphate. Its function is as follows. DNA-dependent RNA polymerase catalyzes the transcription of DNA into RNA using the four ribonucleoside triphosphates as substrates. In Legionella pneumophila subsp. pneumophila (strain Philadelphia 1 / ATCC 33152 / DSM 7513), this protein is DNA-directed RNA polymerase subunit beta'.